A 170-amino-acid polypeptide reads, in one-letter code: Adenine phosphoribosyltransferase (170 aa).

Belongs to the purine/pyrimidine phosphoribosyltransferase family. Homodimer.

The protein resides in the cytoplasm. The enzyme catalyses AMP + diphosphate = 5-phospho-alpha-D-ribose 1-diphosphate + adenine. The protein operates within purine metabolism; AMP biosynthesis via salvage pathway; AMP from adenine: step 1/1. In terms of biological role, catalyzes a salvage reaction resulting in the formation of AMP, that is energically less costly than de novo synthesis. In Acholeplasma laidlawii (strain PG-8A), this protein is Adenine phosphoribosyltransferase.